The chain runs to 236 residues: Uridylate kinase (236 aa).

Lys8–Gly11 provides a ligand contact to ATP. A UMP-binding site is contributed by Gly51. ATP contacts are provided by Gly52 and Arg56. UMP-binding positions include Asp71 and Thr133–Thr140. The ATP site is built by Asn161, Phe167, and Asp170.

The protein belongs to the UMP kinase family. Homohexamer.

It is found in the cytoplasm. The catalysed reaction is UMP + ATP = UDP + ADP. It participates in pyrimidine metabolism; CTP biosynthesis via de novo pathway; UDP from UMP (UMPK route): step 1/1. Inhibited by UTP. Its function is as follows. Catalyzes the reversible phosphorylation of UMP to UDP. The protein is Uridylate kinase of Mesomycoplasma hyopneumoniae (strain 232) (Mycoplasma hyopneumoniae).